Here is a 505-residue protein sequence, read N- to C-terminus: 4-alpha-glucanotransferase (505 aa).

This sequence belongs to the disproportionating enzyme family.

It localises to the cytoplasm. The enzyme catalyses Transfers a segment of a (1-&gt;4)-alpha-D-glucan to a new position in an acceptor, which may be glucose or a (1-&gt;4)-alpha-D-glucan.. This Streptococcus pneumoniae serotype 4 (strain ATCC BAA-334 / TIGR4) protein is 4-alpha-glucanotransferase (malQ).